Here is a 145-residue protein sequence, read N- to C-terminus: D-aminoacyl-tRNA deacylase (145 aa).

Residues 137–138 (GP) carry the Gly-cisPro motif, important for rejection of L-amino acids motif.

It belongs to the DTD family. In terms of assembly, homodimer.

It localises to the cytoplasm. The catalysed reaction is glycyl-tRNA(Ala) + H2O = tRNA(Ala) + glycine + H(+). It carries out the reaction a D-aminoacyl-tRNA + H2O = a tRNA + a D-alpha-amino acid + H(+). In terms of biological role, an aminoacyl-tRNA editing enzyme that deacylates mischarged D-aminoacyl-tRNAs. Also deacylates mischarged glycyl-tRNA(Ala), protecting cells against glycine mischarging by AlaRS. Acts via tRNA-based rather than protein-based catalysis; rejects L-amino acids rather than detecting D-amino acids in the active site. By recycling D-aminoacyl-tRNA to D-amino acids and free tRNA molecules, this enzyme counteracts the toxicity associated with the formation of D-aminoacyl-tRNA entities in vivo and helps enforce protein L-homochirality. The sequence is that of D-aminoacyl-tRNA deacylase from Shewanella sediminis (strain HAW-EB3).